The following is a 346-amino-acid chain: Selenide, water dikinase (346 aa).

The active site involves Cys-15. ATP is bound by residues Lys-18 and 46-48; that span reads SKD. Position 49 (Asp-49) interacts with Mg(2+). ATP contacts are provided by residues Asp-66, Asp-89, and 137–139; that span reads GHS. Residue Asp-89 participates in Mg(2+) binding. Asp-225 is a Mg(2+) binding site.

Belongs to the selenophosphate synthase 1 family. Class I subfamily. Homodimer. Mg(2+) serves as cofactor.

It catalyses the reaction hydrogenselenide + ATP + H2O = selenophosphate + AMP + phosphate + 2 H(+). In terms of biological role, synthesizes selenophosphate from selenide and ATP. This Photobacterium profundum (strain SS9) protein is Selenide, water dikinase.